A 395-amino-acid polypeptide reads, in one-letter code: Calcium sensing receptor, chloroplastic (395 aa).

Residues 1–12 (MAPVPVSVSATL) show a composition bias toward low complexity. The interval 1–27 (MAPVPVSVSATLAPPPAAPPKTTSRSW) is disordered. The N-terminal 39 residues, 1 to 39 (MAPVPVSVSATLAPPPAAPPKTTSRSWERRAPADAAFAA), are a transit peptide targeting the chloroplast. Topologically, residues 40-182 (ASSVAGSAAL…TITSLGPEDY (143 aa)) are lumenal, thylakoid. The helical transmembrane segment at 183–203 (VVAAGXAFLAYLLVPPVWSLV) threads the bilayer. Topologically, residues 204–395 (SSSLRGYKGD…TRKLLPGGVD (192 aa)) are stromal. The Rhodanese domain maps to 224–345 (TTQGYVLIDV…WAQSRLGTDS (122 aa)). At threonine 377 the chain carries Phosphothreonine.

Phosphorylated in both bundle sheath and mesophyll cells, under both low and high light regimes (70 vs 900 umol photons/m-2/s).

It is found in the plastid. The protein resides in the chloroplast thylakoid membrane. Its function is as follows. Modulates cytoplasmic Ca(2+) concentration and is crucial for proper stomatal regulation in response to elevated levels of external Ca(2+). May function by regulating concentrations of inositol 1,4,5-trisphosphate (IP3), which in turn triggers release of Ca(2+) from internal stores. May play a role in de-etiolation. The polypeptide is Calcium sensing receptor, chloroplastic (Zea mays (Maize)).